A 284-amino-acid polypeptide reads, in one-letter code: Tropomyosin (284 aa).

A disordered region spans residues 1–38; sequence MEAIKKKMQAMKLEKDNAVDRAETAEQQSREAALRAEK. Positions 1–284 form a coiled coil; the sequence is MEAIKKKMQA…DQTFSELTGY (284 aa). Residues 12–38 show a composition bias toward basic and acidic residues; it reads KLEKDNAVDRAETAEQQSREAALRAEK.

This sequence belongs to the tropomyosin family. As to quaternary structure, homodimer.

Functionally, tropomyosin, in association with the troponin complex, plays a central role in the calcium dependent regulation of muscle contraction. This chain is Tropomyosin, found in Rhipicephalus microplus (Cattle tick).